The sequence spans 412 residues: GTPase Obg (412 aa).

The Obg domain occupies 1–159 (MKFLDQAKIF…RWIWLRLKMI (159 aa)). One can recognise an OBG-type G domain in the interval 160–327 (ADAGLVGLPN…ILARLFTHIR (168 aa)). GTP contacts are provided by residues 166–173 (GLPNAGKS), 191–195 (FTTLH), 212–215 (DIPG), 279–282 (NKCD), and 308–310 (SGV). Mg(2+) is bound by residues S173 and T193. Positions 335–412 (AVPAASPIFG…ADDEEDDAEE (78 aa)) are disordered. Acidic residues predominate over residues 385–412 (NDGDEVDEDYDDEDLEEVADDEEDDAEE).

Belongs to the TRAFAC class OBG-HflX-like GTPase superfamily. OBG GTPase family. In terms of assembly, monomer. It depends on Mg(2+) as a cofactor.

The protein localises to the cytoplasm. Functionally, an essential GTPase which binds GTP, GDP and possibly (p)ppGpp with moderate affinity, with high nucleotide exchange rates and a fairly low GTP hydrolysis rate. Plays a role in control of the cell cycle, stress response, ribosome biogenesis and in those bacteria that undergo differentiation, in morphogenesis control. The polypeptide is GTPase Obg (Paramagnetospirillum magneticum (strain ATCC 700264 / AMB-1) (Magnetospirillum magneticum)).